The primary structure comprises 1403 residues: DNA-directed RNA polymerase subunit beta' (1403 aa).

Residues Cys-70, Cys-72, Cys-85, and Cys-88 each contribute to the Zn(2+) site. Mg(2+)-binding residues include Asp-461, Asp-463, and Asp-465. Positions 687-708 (QQISQEETTGDRDGKRETRKQP) are disordered. Basic and acidic residues predominate over residues 695 to 706 (TGDRDGKRETRK). 4 residues coordinate Zn(2+): Cys-805, Cys-879, Cys-886, and Cys-889. A disordered region spans residues 1381-1403 (THGDTGPLGEPSRPVGTQTTGAA).

It belongs to the RNA polymerase beta' chain family. The RNAP catalytic core consists of 2 alpha, 1 beta, 1 beta' and 1 omega subunit. When a sigma factor is associated with the core the holoenzyme is formed, which can initiate transcription. Requires Mg(2+) as cofactor. Zn(2+) serves as cofactor.

The enzyme catalyses RNA(n) + a ribonucleoside 5'-triphosphate = RNA(n+1) + diphosphate. In terms of biological role, DNA-dependent RNA polymerase catalyzes the transcription of DNA into RNA using the four ribonucleoside triphosphates as substrates. This chain is DNA-directed RNA polymerase subunit beta', found in Myxococcus xanthus (strain DK1622).